A 248-amino-acid polypeptide reads, in one-letter code: Type II methyltransferase M.AquIA (248 aa).

In terms of domain architecture, SAM-dependent MTase C5-type spans 3–248 (KKLISLFSGA…IKDRIKNHGY (246 aa)). Cysteine 82 is a catalytic residue.

This sequence belongs to the class I-like SAM-binding methyltransferase superfamily. C5-methyltransferase family. As to quaternary structure, heterodimer of an alpha and a beta subunit.

It carries out the reaction a 2'-deoxycytidine in DNA + S-adenosyl-L-methionine = a 5-methyl-2'-deoxycytidine in DNA + S-adenosyl-L-homocysteine + H(+). Functionally, a methylase, recognizes the double-stranded sequence 5'-CYCGRG-3', methylates C-1 on both strands, and protects the DNA from cleavage by the AquI endonuclease. The polypeptide is Type II methyltransferase M.AquIA (aquIMA) (Picosynechococcus sp. (strain ATCC 27264 / PCC 7002 / PR-6) (Agmenellum quadruplicatum)).